The sequence spans 842 residues: 9-beta-pimara-7,15-diene synthase, chloroplastic (842 aa).

Residues 1-56 (MASPMEAVARSSLVLAPRRRRALGLLPAAAAAAPFVLDCRRRHNGGMRRPHVSFAC) constitute a chloroplast transit peptide. The Mg(2+) site is built by aspartate 591, aspartate 595, asparagine 735, serine 739, and glutamate 743. A DDXXD motif motif is present at residues 591 to 595 (DDFFD).

The protein belongs to the terpene synthase family. Mg(2+) serves as cofactor. In terms of tissue distribution, expressed in roots.

The protein localises to the plastid. It localises to the chloroplast. It carries out the reaction 9alpha-copalyl diphosphate = 9beta-pimara-7,15-diene + diphosphate. Functionally, involved in the biosynthesis of momilactone A and B phytoalexins. Catalyzes the conversion of syn-copalyl diphosphate to the phytoalexin precursor syn-pimara-7,15-diene. This chain is 9-beta-pimara-7,15-diene synthase, chloroplastic, found in Oryza sativa subsp. japonica (Rice).